Reading from the N-terminus, the 436-residue chain is Testis-expressed protein 44 (436 aa).

2 stretches are compositionally biased toward acidic residues: residues 1-10 and 45-54; these read MTTEPLEDPE and LPDEVPPEDI. Disordered stretches follow at residues 1–142 and 165–307; these read MTTE…LTSL and AENN…SLYG. Composition is skewed to polar residues over residues 81–103 and 167–195; these read ASMQ…TDTS and NNRT…TVSE. The span at 234 to 247 shows a compositional bias: basic and acidic residues; it reads EPTKSADQEAEDFK. Over residues 273 to 289 the composition is skewed to pro residues; that stretch reads QAPPSPNSPADSPPPSP. A Phosphoserine modification is found at Ser-375.

Its subcellular location is the cytoplasm. This chain is Testis-expressed protein 44 (Tex44), found in Rattus norvegicus (Rat).